We begin with the raw amino-acid sequence, 396 residues long: Probable sugar efflux transporter (396 aa).

The next 12 membrane-spanning stretches (helical) occupy residues 15–35 (VVTLAVAAFIFNTTEFVPVGL), 50–70 (VGIMLTIYAWVVALMSLPFML), 81–101 (LICLFVVFIASHVLSFLSWSF), 103–123 (VLVISRIGVAFAHAIFWSITA), 136–156 (AQALSLIATGTALAMVLGLPL), 170–190 (FFAIGIGALITLLCLIKLLPL), 209–229 (PALMSIYLLTVVVVTAHYTAY), 246–266 (FATALLLLLGGAGIIGSVIFG), 275–295 (ALVSTAIALLLVCLALLLPAA), 299–319 (IHLGVLSIFWGIAMMLIGLGM), 333–353 (VAMALFSGIFNIGIGAGALVG), and 364–384 (MIGYVGAVPAFAALIWSIIIF).

Belongs to the major facilitator superfamily. SotB (TC 2.A.1.2) family.

It localises to the cell inner membrane. Involved in the efflux of sugars. The physiological role may be the reduction of the intracellular concentration of toxic sugars or sugar metabolites. This chain is Probable sugar efflux transporter, found in Shigella boydii serotype 18 (strain CDC 3083-94 / BS512).